We begin with the raw amino-acid sequence, 310 residues long: Vomeronasal type-1 receptor 44 (310 aa).

At methionine 1 to glutamate 20 the chain is on the extracellular side. A helical transmembrane segment spans residues valine 21 to glycine 41. Residues glutamate 42–leucine 50 are Cytoplasmic-facing. A helical membrane pass occupies residues tyrosine 51–valine 71. Topologically, residues aspartate 72–arginine 93 are extracellular. Cysteine 85 and cysteine 172 are oxidised to a cystine. A helical membrane pass occupies residues phenylalanine 94 to leucine 114. Residues serine 115–histidine 131 are Cytoplasmic-facing. The helical transmembrane segment at isoleucine 132 to valine 152 threads the bilayer. Residues serine 153–alanine 190 lie on the Extracellular side of the membrane. N-linked (GlcNAc...) asparagine glycosylation occurs at asparagine 159. A helical transmembrane segment spans residues isoleucine 191–leucine 211. Residues tryptophan 212–arginine 238 lie on the Cytoplasmic side of the membrane. A helical membrane pass occupies residues threonine 239 to histidine 259. The Extracellular portion of the chain corresponds to serine 260 to serine 268. Residues isoleucine 269–phenylalanine 289 traverse the membrane as a helical segment. Residues isoleucine 290–isoleucine 310 are Cytoplasmic-facing.

This sequence belongs to the G-protein coupled receptor 1 family.

It localises to the cell membrane. Functionally, putative pheromone receptor implicated in the regulation of social and reproductive behavior. The protein is Vomeronasal type-1 receptor 44 (Vmn1r44) of Mus musculus (Mouse).